Here is a 556-residue protein sequence, read N- to C-terminus: MSVSAFNRRWAAVILEALTRHGVRHICIAPGSRSTPLTLAAAENSAFIHHTHFDERGLGHLALGLAKVSKQPVAVIVTSGTAVANLYPALIEAGLTGEKLILLTADRPPELIDCGANQAIRQPGMFASHPTHSISLPRPTQDISARWLVSTIDHALGTLHAGGVHINCPFAEPLYGEMDDTGLSWQQRLGDWWQDDKPWLREAPRLESEKQRDWFFWRQKRGVVVAGRMSAEEGKKVALWAQTLGWPLIGDVLSQTGQPLPCADLWLGNAKATSELQQAQIVVQLGSSLTGKRLLQWQASCEPEEYWIVDDIEGRLDPAHHRGRRLIANIADWLELHPAEKRQPWCIEIPRLAEQAMQAVIARRDAFGEAQLAHRISDYLPEQGQLFVGNSLVVRLIDALSQLPAGYPVYSNRGASGIDGLLSTAAGVQRASGKPTLAIVGDLSALYDLNALALLRQVSAPLVLIVVNNNGGQIFSLLPTPKSERERFYLMPQNVHFEHAAAMFELKYHRPQNWQELETALADAWRTPTTTVIEMVVNDTDGAQTLQQLLAQVSHL.

It belongs to the TPP enzyme family. MenD subfamily. Homodimer. Requires Mg(2+) as cofactor. Mn(2+) is required as a cofactor. The cofactor is thiamine diphosphate.

The catalysed reaction is isochorismate + 2-oxoglutarate + H(+) = 5-enolpyruvoyl-6-hydroxy-2-succinyl-cyclohex-3-ene-1-carboxylate + CO2. It participates in quinol/quinone metabolism; 1,4-dihydroxy-2-naphthoate biosynthesis; 1,4-dihydroxy-2-naphthoate from chorismate: step 2/7. The protein operates within quinol/quinone metabolism; menaquinone biosynthesis. Its function is as follows. Catalyzes the thiamine diphosphate-dependent decarboxylation of 2-oxoglutarate and the subsequent addition of the resulting succinic semialdehyde-thiamine pyrophosphate anion to isochorismate to yield 2-succinyl-5-enolpyruvyl-6-hydroxy-3-cyclohexene-1-carboxylate (SEPHCHC). In Escherichia fergusonii (strain ATCC 35469 / DSM 13698 / CCUG 18766 / IAM 14443 / JCM 21226 / LMG 7866 / NBRC 102419 / NCTC 12128 / CDC 0568-73), this protein is 2-succinyl-5-enolpyruvyl-6-hydroxy-3-cyclohexene-1-carboxylate synthase.